Consider the following 298-residue polypeptide: 4-hydroxybenzoate octaprenyltransferase (298 aa).

The next 7 helical transmembrane spans lie at 30 to 50 (IGTW…AEGI), 54 to 74 (GTLL…CVVN), 105 to 125 (VLFA…NLPT), 148 to 168 (FPQV…FMAI), 218 to 238 (DRLM…WVGL), 240 to 260 (LALG…FVFQ), and 275 to 295 (AFLN…LSLW).

This sequence belongs to the UbiA prenyltransferase family. The cofactor is Mg(2+).

The protein localises to the cell inner membrane. The enzyme catalyses all-trans-octaprenyl diphosphate + 4-hydroxybenzoate = 4-hydroxy-3-(all-trans-octaprenyl)benzoate + diphosphate. It functions in the pathway cofactor biosynthesis; ubiquinone biosynthesis. Catalyzes the prenylation of para-hydroxybenzoate (PHB) with an all-trans polyprenyl group. Mediates the second step in the final reaction sequence of ubiquinone-8 (UQ-8) biosynthesis, which is the condensation of the polyisoprenoid side chain with PHB, generating the first membrane-bound Q intermediate 3-octaprenyl-4-hydroxybenzoate. In Chromohalobacter salexigens (strain ATCC BAA-138 / DSM 3043 / CIP 106854 / NCIMB 13768 / 1H11), this protein is 4-hydroxybenzoate octaprenyltransferase.